The sequence spans 400 residues: Tyrosine--tRNA ligase (400 aa).

The 'HIGH' region motif lies at 45–54; it reads PTAPDLHLGH. A 'KMSKS' region motif is present at residues 230-234; sequence KMSKS. ATP is bound at residue lysine 233. The S4 RNA-binding domain maps to 339 to 399; sequence EWIARVLVIA…GKRRFAKVII (61 aa).

The protein belongs to the class-I aminoacyl-tRNA synthetase family. TyrS type 2 subfamily. Homodimer.

It localises to the cytoplasm. The catalysed reaction is tRNA(Tyr) + L-tyrosine + ATP = L-tyrosyl-tRNA(Tyr) + AMP + diphosphate + H(+). Catalyzes the attachment of tyrosine to tRNA(Tyr) in a two-step reaction: tyrosine is first activated by ATP to form Tyr-AMP and then transferred to the acceptor end of tRNA(Tyr). The sequence is that of Tyrosine--tRNA ligase from Helicobacter hepaticus (strain ATCC 51449 / 3B1).